Reading from the N-terminus, the 292-residue chain is Small ribosomal subunit protein uS3 (292 aa).

The KH type-2 domain maps to I39–K110. Positions K247 to T268 are disordered.

This sequence belongs to the universal ribosomal protein uS3 family. In terms of assembly, part of the 30S ribosomal subunit. Forms a tight complex with proteins S10 and S14.

In terms of biological role, binds the lower part of the 30S subunit head. Binds mRNA in the 70S ribosome, positioning it for translation. This chain is Small ribosomal subunit protein uS3, found in Borrelia garinii subsp. bavariensis (strain ATCC BAA-2496 / DSM 23469 / PBi) (Borreliella bavariensis).